Here is a 171-residue protein sequence, read N- to C-terminus: UPF0398 protein STER_0279 (171 aa).

Belongs to the UPF0398 family.

In Streptococcus thermophilus (strain ATCC BAA-491 / LMD-9), this protein is UPF0398 protein STER_0279.